The chain runs to 121 residues: MMKKFIAPLLALLVSGCQIDPYTHAPTLTSTDWYDVGMEDAISGSAIKDDDAFSDSQADRGLYLKGYAEGQKKTCQTDFTYARGLSGKSFPASCNNVENASQLHEVWQKGADENASTIRLN.

This is an uncharacterized protein from Escherichia coli (strain K12).